Reading from the N-terminus, the 767-residue chain is Syn-copalyl diphosphate synthase, chloroplastic (767 aa).

The N-terminal 47 residues, 1 to 47, are a transit peptide targeting the chloroplast; that stretch reads MPVFTASFQCVTLFGQPASAADAQPLLQGQRPFLHLHARRRRPCGPM. Positions 45 to 74 are disordered; the sequence is GPMLISKSPPYPASEETREWEADGQHEHTD. The span at 59-74 shows a compositional bias: basic and acidic residues; sequence EETREWEADGQHEHTD. Lysine 233 provides a ligand contact to substrate. The Mg(2+) site is built by aspartate 365 and aspartate 367. A DXDD motif motif is present at residues 365-368; sequence DIDD. Lysine 453 contacts substrate.

This sequence belongs to the terpene synthase family. The cofactor is Mg(2+).

It is found in the plastid. The protein resides in the chloroplast. It carries out the reaction (2E,6E,10E)-geranylgeranyl diphosphate = 9alpha-copalyl diphosphate. Catalyzes the conversion of geranylgeranyl diphosphate to the phytoalexin precursor syn-copalyl diphosphate. Required for the biosynthesis of momilactones that exude from roots and act as allelochemicals against lowland weeds in paddy soil. In Oryza sativa subsp. japonica (Rice), this protein is Syn-copalyl diphosphate synthase, chloroplastic.